The chain runs to 195 residues: dTDP-4-dehydrorhamnose 3,5-epimerase (195 aa).

Residues Arg31, Glu36, 54–56 (QDN), and Arg67 each bind substrate. The Proton acceptor role is filled by His70. Substrate-binding residues include Lys80 and His127. Tyr140 serves as the catalytic Proton donor. Substrate is bound by residues Asp151 and Lys176.

It belongs to the dTDP-4-dehydrorhamnose 3,5-epimerase family. As to quaternary structure, homodimer.

The catalysed reaction is dTDP-4-dehydro-6-deoxy-alpha-D-glucose = dTDP-4-dehydro-beta-L-rhamnose. Its pathway is carbohydrate biosynthesis; dTDP-L-rhamnose biosynthesis. Functionally, catalyzes the epimerization of the C3' and C5'positions of dTDP-6-deoxy-D-xylo-4-hexulose, forming dTDP-6-deoxy-L-lyxo-4-hexulose. This chain is dTDP-4-dehydrorhamnose 3,5-epimerase, found in Sinorhizobium fredii (strain NBRC 101917 / NGR234).